The following is a 185-amino-acid chain: MINDIKKTAESKMQKTIEAFKHTLAKVRTGRAHAGLLDHITVDYYGSDTPINQVANVTLIDARTIGVQVWEKNMAAKVEKAIRDSDLGLNPMSMGEVIRVPMPALTEERRRDLTKVVKGEAEDARVAVRNVRRDANNDLKTLLKDKDITEDEERRAQDDIQKLTDKYVAEVDKLFAEKEKELMAI.

Belongs to the RRF family.

It localises to the cytoplasm. Functionally, responsible for the release of ribosomes from messenger RNA at the termination of protein biosynthesis. May increase the efficiency of translation by recycling ribosomes from one round of translation to another. This chain is Ribosome-recycling factor, found in Laribacter hongkongensis (strain HLHK9).